Consider the following 291-residue polypeptide: Protease HtpX homolog (291 aa).

Helical transmembrane passes span 4 to 24 and 39 to 59; these read ILLFVLTNVAVVAVLGIVASL and GSLLGFALVIGFGGAIISLLI. His144 contacts Zn(2+). Residue Glu145 is part of the active site. Residue His148 coordinates Zn(2+). The next 2 membrane-spanning stretches (helical) occupy residues 159 to 179 and 199 to 219; these read LIQGVMNTFVVFLSRVIAFAI and ITTVVLDIVLGFAAAIVVAWF. Glu224 lines the Zn(2+) pocket.

Belongs to the peptidase M48B family. Requires Zn(2+) as cofactor.

The protein resides in the cell inner membrane. This chain is Protease HtpX homolog, found in Albidiferax ferrireducens (strain ATCC BAA-621 / DSM 15236 / T118) (Rhodoferax ferrireducens).